Reading from the N-terminus, the 439-residue chain is Maintenance of mitochondrial morphology protein 1 (439 aa).

Over 1–76 (MSQDLIETTA…NGNTWSFTQG (76 aa)) the chain is Lumenal. Residues 77-97 (LVIGQVSVIFIIIVFVKFFVF) form a helical membrane-spanning segment. Residues 98 to 439 (ADSSSHIPTK…TPGEYVNSNI (342 aa)) lie on the Cytoplasmic side of the membrane. 3 disordered regions span residues 125-145 (KHSN…SLDS), 309-336 (MNGY…DGGT), and 405-425 (REPV…GTSA). One can recognise an SMP-LTD domain in the interval 165–395 (ASESLDWFNV…EPRFQVVRLP (231 aa)). 2 stretches are compositionally biased toward low complexity: residues 315–326 (ENANGDGASSSN) and 410–424 (KKTT…NGTS).

This sequence belongs to the MMM1 family. Homodimer. Component of the ER-mitochondria encounter structure (ERMES) or MDM complex, composed of MMM1, MDM10, MDM12 and MDM34. An MMM1 homodimer associates with one molecule of MDM12 on each side in a pairwise head-to-tail manner, and the SMP-LTD domains of MMM1 and MDM12 generate a continuous hydrophobic tunnel for phospholipid trafficking.

The protein resides in the endoplasmic reticulum membrane. Its function is as follows. Component of the ERMES/MDM complex, which serves as a molecular tether to connect the endoplasmic reticulum (ER) and mitochondria. Components of this complex are involved in the control of mitochondrial shape and protein biogenesis, and function in nonvesicular lipid trafficking between the ER and mitochondria. The MDM12-MMM1 subcomplex functions in the major beta-barrel assembly pathway that is responsible for biogenesis of all outer membrane beta-barrel proteins, and acts in a late step after the SAM complex. The MDM10-MDM12-MMM1 subcomplex further acts in the TOM40-specific pathway after the action of the MDM12-MMM1 complex. Essential for establishing and maintaining the structure of mitochondria and maintenance of mtDNA nucleoids. This chain is Maintenance of mitochondrial morphology protein 1, found in Candida albicans (strain WO-1) (Yeast).